Here is a 100-residue protein sequence, read N- to C-terminus: A-type ATP synthase subunit F (100 aa).

Belongs to the V-ATPase F subunit family. As to quaternary structure, has multiple subunits with at least A(3), B(3), C, D, E, F, H, I and proteolipid K(x).

It localises to the cell membrane. Component of the A-type ATP synthase that produces ATP from ADP in the presence of a proton gradient across the membrane. This is A-type ATP synthase subunit F from Methanoregula boonei (strain DSM 21154 / JCM 14090 / 6A8).